A 505-amino-acid chain; its full sequence is Transcription factor APG (505 aa).

Disordered regions lie at residues 1 to 40 (MLRG…CSAA), 61 to 99 (GAAN…DTAP), 119 to 156 (PAAA…SGGG), 169 to 242 (PLQQ…APTT), 256 to 312 (AQRL…SQDE), 324 to 344 (RRSA…NLSE), and 469 to 505 (PPPP…VKQA). Residues 23–33 (PLRPPPPPPFQ) show a composition bias toward pro residues. Over residues 131–144 (CSSSHGAVVPSTSA) the composition is skewed to polar residues. The segment covering 174-199 (PSGGETASASASAAATSTVPVESTVV) has biased composition (low complexity). Over residues 200–212 (QAATNRLRSTPLF) the composition is skewed to polar residues. Residues 222–239 (PPKPSPRAAAPPPPPPLA) show a composition bias toward pro residues. Basic and acidic residues predominate over residues 288–299 (GDRRQLNWRDSH). Polar residues predominate over residues 300-310 (NNQSAEWSASQ). Basic residues predominate over residues 324-334 (RRSAARSSKRS). A compositionally biased stretch (basic and acidic residues) spans 335–344 (RTAEVHNLSE). The 50-residue stretch at 335–384 (RTAEVHNLSERRRRDRINEKMRALQELIPNCNKIDKASMLEEAIEYLKTL) folds into the bHLH domain. Low complexity predominate over residues 492-505 (GAADAGNAPAVKQA).

It belongs to the bHLH protein family. In terms of assembly, homodimer and heterodimer with ILI5 or ILI6.

The protein resides in the nucleus. Atypical bHLH transcription factor that acts as a negative regulator of grain size. Binds the transcription factor ILI6 and forms a heterodimer of antagonistic bHLH transcription factors that regulates grain length and weight by controlling cell elongation in lemma and palea. May be involved in the control of lamina inclination through brassinosteroid signaling pathway. The protein is Transcription factor APG (APG) of Oryza sativa subsp. japonica (Rice).